We begin with the raw amino-acid sequence, 336 residues long: Nicotinate-nucleotide--dimethylbenzimidazole phosphoribosyltransferase (336 aa).

Residues 20–41 (GPDAAARAGAEERNGQLTKPPG) are disordered. Glutamate 304 serves as the catalytic Proton acceptor.

It belongs to the CobT family.

It carries out the reaction 5,6-dimethylbenzimidazole + nicotinate beta-D-ribonucleotide = alpha-ribazole 5'-phosphate + nicotinate + H(+). Its pathway is nucleoside biosynthesis; alpha-ribazole biosynthesis; alpha-ribazole from 5,6-dimethylbenzimidazole: step 1/2. Catalyzes the synthesis of alpha-ribazole-5'-phosphate from nicotinate mononucleotide (NAMN) and 5,6-dimethylbenzimidazole (DMB). The polypeptide is Nicotinate-nucleotide--dimethylbenzimidazole phosphoribosyltransferase (Ruegeria pomeroyi (strain ATCC 700808 / DSM 15171 / DSS-3) (Silicibacter pomeroyi)).